An 82-amino-acid chain; its full sequence is Small ribosomal subunit protein eS17 (82 aa).

Belongs to the eukaryotic ribosomal protein eS17 family.

The chain is Small ribosomal subunit protein eS17 from Sulfolobus acidocaldarius (strain ATCC 33909 / DSM 639 / JCM 8929 / NBRC 15157 / NCIMB 11770).